Here is a 409-residue protein sequence, read N- to C-terminus: MSTHPIRVFSEIGKLKKVMLHRPGKELENLQPDYLERLLFDDIPFLEDAQKEHDNFAQALRNEGVEVLYLEQLAAESLTSPEIREQFIEEYLEEANIRGRETKKAIRELLRGIKDNRELVEKTMAGVQKVELPEIPEEAKGLTDLVESDYPFAIDPMPNLYFTRDPFATIGNAVSLNHMYADTRNRETLYGKYIFKHHPVYGGKVDLVYNREEDTRIEGGDELVLSKDVLAVGISQRTDAASIEKLLVNIFKKNVGFKKVLAFEFANNRKFMHLDTVFTMVDYDKFTIHPEIEGDLRVYSVTYVDDKLKIVEEKGDLAEILAENLGVEKVHLIRCGGGNIVAAAREQWNDGSNTLTIAPGVVVVYDRNTVTNKILEEYGLRLIKIRGSELVRGRGGPRCMSMPFEREEI.

Catalysis depends on Cys-399, which acts as the Amidino-cysteine intermediate.

This sequence belongs to the arginine deiminase family.

The protein resides in the cytoplasm. It catalyses the reaction L-arginine + H2O = L-citrulline + NH4(+). It participates in amino-acid degradation; L-arginine degradation via ADI pathway; carbamoyl phosphate from L-arginine: step 1/2. The sequence is that of Arginine deiminase from Streptococcus sanguinis (strain SK36).